A 60-amino-acid chain; its full sequence is Ribosome-inactivating protein dianthin-32 (60 aa).

Belongs to the ribosome-inactivating protein family. Type 1 RIP subfamily.

It carries out the reaction Endohydrolysis of the N-glycosidic bond at one specific adenosine on the 28S rRNA.. Functionally, single-chain ribosome-inactivating protein. The polypeptide is Ribosome-inactivating protein dianthin-32 (Dianthus caryophyllus (Carnation)).